A 49-amino-acid chain; its full sequence is uncharacterized protein (49 aa).

A helical membrane pass occupies residues 5–25; sequence LTTIFSVVIVLAIFLYFGLLI.

This sequence belongs to the plectrovirus ORF12 protein family.

The protein localises to the host membrane. This is an uncharacterized protein from Spiroplasma virus SpV1-R8A2 B (SpV1).